Consider the following 499-residue polypeptide: MEEFQVYLELDRSRQHDFLYPLIFREYIYALAYDHGLNSSILVQNXGYDNKSSLLIVKRLITRMYQQNHLIISANDSNKNPFWGYNKNLYSQIISEGLAVSVEIPFSLQLISSLEKAEIIKSYNLRSIHSIFPFFEEKFPYLNYVSDVQIPYPIHLEILIQSLRYWVKDASSFHLLRLFLYEYCNWNSLITPKKRISTFSKRNPXFXLXLYNFYVCEYXSIFLFLRNKSSYLRLTSSGVLFERIYFYAKIXHFVKVFDKDFLSTLWFFKDPFIHYVRYQGKSILASKNTPFLMKKWKYYLIHLWQCHFFVWSQPGKIHINQLSEHSFYFLGYFSNVRINPSVVRSQMLEKSFIMENLMKKLDTIIPIIPLIRSLAKAKFCNILGHPISKPVWADSSDFDIIDRFLQICRNLSHYYNGSSKKKSLYRIKYILRLSCIKTLARKHKSTVRVFLKRLGSELLEEFFTEEEDIFSLIFSRASSTLQKLYRGRIWYLDIFDFHQ.

It belongs to the intron maturase 2 family. MatK subfamily.

The protein localises to the plastid. Its subcellular location is the chloroplast. Functionally, usually encoded in the trnK tRNA gene intron. Probably assists in splicing its own and other chloroplast group II introns. This chain is Maturase K, found in Neltuma juliflora (Mesquite).